A 37-amino-acid polypeptide reads, in one-letter code: Cytochrome b6-f complex subunit 5 (37 aa).

Residues 5–25 (LLSGIVLGLVPITITGLLVTA) form a helical membrane-spanning segment.

It belongs to the PetG family. As to quaternary structure, the 4 large subunits of the cytochrome b6-f complex are cytochrome b6, subunit IV (17 kDa polypeptide, PetD), cytochrome f and the Rieske protein, while the 4 small subunits are PetG, PetL, PetM and PetN. The complex functions as a dimer.

The protein localises to the plastid. The protein resides in the chloroplast thylakoid membrane. Its function is as follows. Component of the cytochrome b6-f complex, which mediates electron transfer between photosystem II (PSII) and photosystem I (PSI), cyclic electron flow around PSI, and state transitions. PetG is required for either the stability or assembly of the cytochrome b6-f complex. The sequence is that of Cytochrome b6-f complex subunit 5 from Tupiella akineta (Green alga).